We begin with the raw amino-acid sequence, 460 residues long: Argininosuccinate lyase (460 aa).

It belongs to the lyase 1 family. Argininosuccinate lyase subfamily.

It is found in the cytoplasm. It catalyses the reaction 2-(N(omega)-L-arginino)succinate = fumarate + L-arginine. It participates in amino-acid biosynthesis; L-arginine biosynthesis; L-arginine from L-ornithine and carbamoyl phosphate: step 3/3. This is Argininosuccinate lyase from Buchnera aphidicola subsp. Cinara cedri (strain Cc).